We begin with the raw amino-acid sequence, 450 residues long: UDP-N-acetylmuramoylalanine--D-glutamate ligase (450 aa).

119 to 125 (GSNGKTT) lines the ATP pocket.

It belongs to the MurCDEF family.

It localises to the cytoplasm. The catalysed reaction is UDP-N-acetyl-alpha-D-muramoyl-L-alanine + D-glutamate + ATP = UDP-N-acetyl-alpha-D-muramoyl-L-alanyl-D-glutamate + ADP + phosphate + H(+). The protein operates within cell wall biogenesis; peptidoglycan biosynthesis. Cell wall formation. Catalyzes the addition of glutamate to the nucleotide precursor UDP-N-acetylmuramoyl-L-alanine (UMA). The polypeptide is UDP-N-acetylmuramoylalanine--D-glutamate ligase (Streptococcus pneumoniae (strain JJA)).